The following is a 952-amino-acid chain: GATA zinc finger domain-containing protein 5 (952 aa).

2 disordered regions span residues 1-36 (MDYQ…DSPS) and 138-197 (PTPL…SPKQ). Residues 10–24 (QISQEFPTDISTTKS) show a composition bias toward polar residues. Over residues 148-157 (SPPPPPPPPA) the composition is skewed to pro residues. Low complexity predominate over residues 158-196 (ATTTTTITTTTTTSAGNSTTKNNNNNNNNNNNNNGKSPK). The GATA-type zinc finger occupies 241-266 (CYQCNTSNTPEWRKGPEGPATLCNAC). Disordered regions lie at residues 380–418 (MTPS…HEQP), 433–478 (LLSS…GGGG), 634–699 (QNNS…NKNN), and 732–816 (QQQE…LSVN). Residues 393 to 412 (KTTKTKPKPKSKSKPGKITH) are compositionally biased toward basic residues. Over residues 445-467 (SSSSSCGTSLNSSLGSSSGTITN) the composition is skewed to low complexity. Residues 468 to 478 (SGGGSSGGGGG) show a composition bias toward gly residues. A compositionally biased stretch (polar residues) spans 634–653 (QNNSFSGPNDQNPYVPSVSL). 3 stretches are compositionally biased toward low complexity: residues 654-668 (NSNK…NNNK), 678-699 (NNKN…NKNN), and 732-745 (QQQE…EQQQ). Residues 746–762 (NLSINNSNQTNENEILG) show a composition bias toward polar residues. Low complexity predominate over residues 763-814 (TTTTTTTSTATIITSQVPMNLSPNSDDNQSSSNYSTLSDSGSSPTDSFSGLS).

The chain is GATA zinc finger domain-containing protein 5 (gtaE) from Dictyostelium discoideum (Social amoeba).